Here is a 212-residue protein sequence, read N- to C-terminus: MNTSRFESLTGSVDVLFPEYDDPPSEPITLLKRWLATADVARVREPKALALATATSDGRISSRVIAFSSIDDRGVIFCTHSTSRKGRELTETGWASGLLYWRETGQQIMISGQAVPLEESENDKLWFGRSVPMHAMSSASHQSDELVDREALRAHAAELLALGVALPRPPRFVGYRLEPHEMEFWAASSDRLHRRLRYERDGNDWKTTQLQP.

Residue Ser8 participates in substrate binding. FMN is bound by residues 63–66 (RVIA) and 78–79 (CT). His80 serves as a coordination point for substrate. FMN contacts are provided by residues 84–85 (RK) and Gln107. Residues Arg129 and Ser137 each coordinate substrate. FMN is bound by residues 142–143 (QS) and Arg195.

It belongs to the pyridoxamine 5'-phosphate oxidase family. Requires FMN as cofactor.

It catalyses the reaction (1R,6R)-1,4,5,5a,6,9-hexahydrophenazine-1,6-dicarboxylate + O2 = (1R,10aS)-1,4,10,10a-tetrahydrophenazine-1,6-dicarboxylate + H2O2. It carries out the reaction (1R,10aS)-1,4,10,10a-tetrahydrophenazine-1,6-dicarboxylate + O2 = (5aS)-5,5a-dihydrophenazine-1,6-dicarboxylate + H2O2. The catalysed reaction is (1R,10aS)-1,4,10,10a-tetrahydrophenazine-1-carboxylate + O2 = (10aS)-10,10a-dihydrophenazine-1-carboxylate + H2O2. The enzyme catalyses (1R)-1,4,5,10-tetrahydrophenazine-1-carboxylate + O2 = (10aS)-10,10a-dihydrophenazine-1-carboxylate + H2O2. The protein operates within antibiotic biosynthesis; phenazine biosynthesis. In terms of biological role, involved in the biosynthesis of the antibiotic phenazine, a nitrogen-containing heterocyclic molecule having important roles in virulence, competition and biological control. Catalyzes several oxidations in the terminal steps of core phenazine biosynthesis. It oxidizes both hexahydrophenazine-1,6-dicarboxylic acid (HHPDC) and tetrahydrophenazine-1-carboxylic acid (THPCA) and thereby contributes to the generation of both phenazine-1,6-dicarboxylic acid (PDC) and phenazine-1-carboxylic acid (PCA). It synthesizes phenazines in their reduced form, which are the likely end products in vivo. In Burkholderia lata (strain ATCC 17760 / DSM 23089 / LMG 22485 / NCIMB 9086 / R18194 / 383), this protein is Dihydrophenazinedicarboxylate synthase.